A 210-amino-acid polypeptide reads, in one-letter code: MPTLLVVEASPRGEQSISRGLTKMFVNQWKREQHDGRVIQRDLMATDLPFVTMPWLGAYFTPPEHQTQDMKNLLRLSDELVAEILSADHIVIGTPVYNYNVPAVLKAYIDHIVRKGKTLGFSGEGLVKGKACTIVMASGGAYTPDSPIRDRDIATGYLRLILKVIGIEDVTVIAGGNAKAVDMGEISRSDFLEAFASDMADAAARPVVQV.

FMN is bound by residues Ser-10 and 16 to 18 (SIS).

The protein belongs to the azoreductase type 1 family. As to quaternary structure, homodimer. The cofactor is FMN.

It catalyses the reaction 2 a quinone + NADH + H(+) = 2 a 1,4-benzosemiquinone + NAD(+). The catalysed reaction is N,N-dimethyl-1,4-phenylenediamine + anthranilate + 2 NAD(+) = 2-(4-dimethylaminophenyl)diazenylbenzoate + 2 NADH + 2 H(+). Its function is as follows. Quinone reductase that provides resistance to thiol-specific stress caused by electrophilic quinones. In terms of biological role, also exhibits azoreductase activity. Catalyzes the reductive cleavage of the azo bond in aromatic azo compounds to the corresponding amines. This is FMN-dependent NADH:quinone oxidoreductase 8 from Burkholderia lata (strain ATCC 17760 / DSM 23089 / LMG 22485 / NCIMB 9086 / R18194 / 383).